The chain runs to 440 residues: Endoglucanase B (440 aa).

Positions 1–33 (MNKRLSRGKISLLASVFVTTTFMGGVNVLASTA) are cleaved as a signal peptide. The active-site Proton donor is glutamate 179. Glutamate 305 (nucleophile) is an active-site residue. The region spanning 381–440 (TSYSLGDVNKDGKVNAIDYAVLKSILLGTNTNVDLSVSDMNKDGKVNALDLAVLKKMLLS) is the Dockerin domain.

The protein belongs to the glycosyl hydrolase 5 (cellulase A) family.

The catalysed reaction is Endohydrolysis of (1-&gt;4)-beta-D-glucosidic linkages in cellulose, lichenin and cereal beta-D-glucans.. The enzyme catalyses Endohydrolysis of (1-&gt;4)-beta-D-xylosidic linkages in xylans.. Its function is as follows. Has endoglucanase activity on carboxymethyl-cellulose (CMC), xylan and lichenan, but not Avicel. This is Endoglucanase B (engB) from Clostridium cellulovorans (strain ATCC 35296 / DSM 3052 / OCM 3 / 743B).